A 315-amino-acid chain; its full sequence is Small ribosomal subunit biogenesis GTPase RsgA (315 aa).

The region spanning 79–243 (LSKESHILGA…LIDTPGIKGF (165 aa)) is the CP-type G domain. Residues 128 to 131 (NKID) and 182 to 190 (GHSGVGKSS) contribute to the GTP site. Positions 267, 272, 274, and 280 each coordinate Zn(2+).

This sequence belongs to the TRAFAC class YlqF/YawG GTPase family. RsgA subfamily. In terms of assembly, monomer. Associates with 30S ribosomal subunit, binds 16S rRNA. The cofactor is Zn(2+).

The protein localises to the cytoplasm. Functionally, one of several proteins that assist in the late maturation steps of the functional core of the 30S ribosomal subunit. Helps release RbfA from mature subunits. May play a role in the assembly of ribosomal proteins into the subunit. Circularly permuted GTPase that catalyzes slow GTP hydrolysis, GTPase activity is stimulated by the 30S ribosomal subunit. The sequence is that of Small ribosomal subunit biogenesis GTPase RsgA from Porphyromonas gingivalis (strain ATCC 33277 / DSM 20709 / CIP 103683 / JCM 12257 / NCTC 11834 / 2561).